The primary structure comprises 305 residues: Ribosomal RNA small subunit methyltransferase H (305 aa).

S-adenosyl-L-methionine is bound by residues 37-39 (GGH), D57, F85, D101, and H108.

Belongs to the methyltransferase superfamily. RsmH family.

The protein resides in the cytoplasm. The catalysed reaction is cytidine(1402) in 16S rRNA + S-adenosyl-L-methionine = N(4)-methylcytidine(1402) in 16S rRNA + S-adenosyl-L-homocysteine + H(+). Specifically methylates the N4 position of cytidine in position 1402 (C1402) of 16S rRNA. In Parabacteroides distasonis (strain ATCC 8503 / DSM 20701 / CIP 104284 / JCM 5825 / NCTC 11152), this protein is Ribosomal RNA small subunit methyltransferase H.